Reading from the N-terminus, the 184-residue chain is GMP synthase [glutamine-hydrolyzing] subunit A (184 aa).

The Glutamine amidotransferase type-1 domain occupies 3–184; sequence HIAVIDNHGQ…VFKNFIARCQ (182 aa). The active-site Nucleophile is the Cys75. Catalysis depends on residues His163 and Glu165.

Heterodimer composed of a glutamine amidotransferase subunit (A) and a GMP-binding subunit (B).

It carries out the reaction XMP + L-glutamine + ATP + H2O = GMP + L-glutamate + AMP + diphosphate + 2 H(+). It functions in the pathway purine metabolism; GMP biosynthesis; GMP from XMP (L-Gln route): step 1/1. Catalyzes the synthesis of GMP from XMP. The chain is GMP synthase [glutamine-hydrolyzing] subunit A from Haloquadratum walsbyi (strain DSM 16790 / HBSQ001).